A 239-amino-acid chain; its full sequence is Diablo IAP-binding mitochondrial protein (239 aa).

The N-terminal 21 residues, 1 to 21 (MAALKSWLSRSVTSFFRYRQC), are a transit peptide targeting the mitochondrion. The IAP-binding motif lies at 56 to 60 (AVPIA). Residues 217 to 239 (RQKTQEEGEERAESEQEAYLRED) form a disordered region.

Belongs to the Smac/DIABLO protein family. As to quaternary structure, homodimer. Interacts with BIRC2/c-IAP1 (via BIR3 domain). Interacts with BIRC6/BRUCE; inhibits BIRC6 activity. Interacts with BIRC7/livin. Interacts with XIAP/BIRC4 (via BIR3 domain). Interacts with the monomeric and dimeric form of BIRC5/survivin. Interacts with AREL1 (via HECT domain); in the cytoplasm following induction of apoptosis. Interacts with BEX3. Post-translationally, ubiquitinated by BIRC7/livin. Ubiquitinated by BIRC6. The precursor form is proteolytically cleaved by mitochondrial processing peptidase MPP to remove the transit peptide and produce an intermediate form. This is then processed by PARL to produce the mature cleaved form which is released from mitochondria into the cytosol in apoptotic cells. As to expression, ubiquitously expressed with highest expression in testis. Expression is also high in heart, liver, kidney, spleen, prostate and ovary. Low in brain, lung, thymus and peripheral blood leukocytes. Isoform 3 is ubiquitously expressed.

It is found in the mitochondrion. The protein localises to the cytoplasm. The protein resides in the cytosol. Its function is as follows. Promotes apoptosis by activating caspases in the cytochrome c/Apaf-1/caspase-9 pathway. Acts by opposing the inhibitory activity of inhibitor of apoptosis proteins (IAP). Inhibits the activity of BIRC6/BRUCE by inhibiting its binding to caspases. Functionally, attenuates the stability and apoptosis-inhibiting activity of XIAP/BIRC4 by promoting XIAP/BIRC4 ubiquitination and degradation through the ubiquitin-proteasome pathway. Also disrupts XIAP/BIRC4 interacting with processed caspase-9 and promotes caspase-3 activation. In terms of biological role, defective in the capacity to down-regulate the XIAP/BIRC4 abundance. The protein is Diablo IAP-binding mitochondrial protein of Homo sapiens (Human).